We begin with the raw amino-acid sequence, 182 residues long: Large ribosomal subunit protein uL10 (182 aa).

It belongs to the universal ribosomal protein uL10 family. As to quaternary structure, part of the ribosomal stalk of the 50S ribosomal subunit. The N-terminus interacts with L11 and the large rRNA to form the base of the stalk. The C-terminus forms an elongated spine to which L12 dimers bind in a sequential fashion forming a multimeric L10(L12)X complex.

Forms part of the ribosomal stalk, playing a central role in the interaction of the ribosome with GTP-bound translation factors. The sequence is that of Large ribosomal subunit protein uL10 from Koribacter versatilis (strain Ellin345).